The chain runs to 179 residues: Large ribosomal subunit protein uL5 (179 aa).

Belongs to the universal ribosomal protein uL5 family. As to quaternary structure, part of the 50S ribosomal subunit; part of the 5S rRNA/L5/L18/L25 subcomplex. Contacts the 5S rRNA and the P site tRNA. Forms a bridge to the 30S subunit in the 70S ribosome.

This is one of the proteins that bind and probably mediate the attachment of the 5S RNA into the large ribosomal subunit, where it forms part of the central protuberance. In the 70S ribosome it contacts protein S13 of the 30S subunit (bridge B1b), connecting the 2 subunits; this bridge is implicated in subunit movement. Contacts the P site tRNA; the 5S rRNA and some of its associated proteins might help stabilize positioning of ribosome-bound tRNAs. In Shewanella baltica (strain OS223), this protein is Large ribosomal subunit protein uL5.